The following is a 1080-amino-acid chain: Carbamoyl phosphate synthase large chain (1080 aa).

The interval 1–403 (MPKRTDLETI…SLQKALRGLE (403 aa)) is carboxyphosphate synthetic domain. The ATP site is built by arginine 129, arginine 169, glycine 175, glycine 176, glutamate 208, valine 210, glutamate 215, glycine 241, valine 242, histidine 243, glutamine 285, and glutamate 299. Positions 133-328 (RVAMGEIGLD…IAKVAAKLAV (196 aa)) constitute an ATP-grasp 1 domain. Residues glutamine 285, glutamate 299, and asparagine 301 each coordinate Mg(2+). Positions 285, 299, and 301 each coordinate Mn(2+). The interval 404–554 (TGKIGLDPTG…YSTYEDECEA (151 aa)) is oligomerization domain. Residues 555–942 (LPTDRDKIMI…AFARAQEAGG (388 aa)) are carbamoyl phosphate synthetic domain. In terms of domain architecture, ATP-grasp 2 spans 679–876 (QQLVDKLGLK…LAKIAARCMA (198 aa)). ATP-binding residues include arginine 715, arginine 754, leucine 756, glutamate 761, glycine 787, valine 788, histidine 789, serine 790, glutamine 830, and glutamate 847. Mg(2+) contacts are provided by glutamine 830, glutamate 847, and asparagine 849. 3 residues coordinate Mn(2+): glutamine 830, glutamate 847, and asparagine 849. The region spanning 943-1080 (IKAPPLGKAF…LQELHKELEA (138 aa)) is the MGS-like domain. The segment at 943-1080 (IKAPPLGKAF…LQELHKELEA (138 aa)) is allosteric domain.

This sequence belongs to the CarB family. Composed of two chains; the small (or glutamine) chain promotes the hydrolysis of glutamine to ammonia, which is used by the large (or ammonia) chain to synthesize carbamoyl phosphate. Tetramer of heterodimers (alpha,beta)4. Requires Mg(2+) as cofactor. Mn(2+) is required as a cofactor.

It carries out the reaction hydrogencarbonate + L-glutamine + 2 ATP + H2O = carbamoyl phosphate + L-glutamate + 2 ADP + phosphate + 2 H(+). The enzyme catalyses hydrogencarbonate + NH4(+) + 2 ATP = carbamoyl phosphate + 2 ADP + phosphate + 2 H(+). It participates in amino-acid biosynthesis; L-arginine biosynthesis; carbamoyl phosphate from bicarbonate: step 1/1. Its pathway is pyrimidine metabolism; UMP biosynthesis via de novo pathway; (S)-dihydroorotate from bicarbonate: step 1/3. Large subunit of the glutamine-dependent carbamoyl phosphate synthetase (CPSase). CPSase catalyzes the formation of carbamoyl phosphate from the ammonia moiety of glutamine, carbonate, and phosphate donated by ATP, constituting the first step of 2 biosynthetic pathways, one leading to arginine and/or urea and the other to pyrimidine nucleotides. The large subunit (synthetase) binds the substrates ammonia (free or transferred from glutamine from the small subunit), hydrogencarbonate and ATP and carries out an ATP-coupled ligase reaction, activating hydrogencarbonate by forming carboxy phosphate which reacts with ammonia to form carbamoyl phosphate. This Xanthomonas axonopodis pv. citri (strain 306) protein is Carbamoyl phosphate synthase large chain.